The primary structure comprises 254 residues: Type III pantothenate kinase (254 aa).

Aspartate 6–valine 13 lines the ATP pocket. Substrate contacts are provided by residues tyrosine 100 and glycine 107–arginine 110. The Proton acceptor role is filled by aspartate 109. Aspartate 129 contacts K(+). Position 132 (threonine 132) interacts with ATP. Threonine 184 contacts substrate.

It belongs to the type III pantothenate kinase family. Homodimer. Requires NH4(+) as cofactor. The cofactor is K(+).

It localises to the cytoplasm. The catalysed reaction is (R)-pantothenate + ATP = (R)-4'-phosphopantothenate + ADP + H(+). Its pathway is cofactor biosynthesis; coenzyme A biosynthesis; CoA from (R)-pantothenate: step 1/5. In terms of biological role, catalyzes the phosphorylation of pantothenate (Pan), the first step in CoA biosynthesis. This is Type III pantothenate kinase from Halalkalibacterium halodurans (strain ATCC BAA-125 / DSM 18197 / FERM 7344 / JCM 9153 / C-125) (Bacillus halodurans).